A 182-amino-acid polypeptide reads, in one-letter code: Large ribosomal subunit protein uL6 (182 aa).

This sequence belongs to the universal ribosomal protein uL6 family. Part of the 50S ribosomal subunit.

Its function is as follows. This protein binds to the 23S rRNA, and is important in its secondary structure. It is located near the subunit interface in the base of the L7/L12 stalk, and near the tRNA binding site of the peptidyltransferase center. The polypeptide is Large ribosomal subunit protein uL6 (Caldicellulosiruptor saccharolyticus (strain ATCC 43494 / DSM 8903 / Tp8T 6331)).